The sequence spans 154 residues: Cyanate hydratase (154 aa).

Active-site residues include R100, E103, and S126.

The protein belongs to the cyanase family.

It catalyses the reaction cyanate + hydrogencarbonate + 3 H(+) = NH4(+) + 2 CO2. Its function is as follows. Catalyzes the reaction of cyanate with bicarbonate to produce ammonia and carbon dioxide. This Aspergillus fumigatus (strain ATCC MYA-4609 / CBS 101355 / FGSC A1100 / Af293) (Neosartorya fumigata) protein is Cyanate hydratase.